The sequence spans 431 residues: Histidine--tRNA ligase (431 aa).

The protein belongs to the class-II aminoacyl-tRNA synthetase family. In terms of assembly, homodimer.

The protein resides in the cytoplasm. It carries out the reaction tRNA(His) + L-histidine + ATP = L-histidyl-tRNA(His) + AMP + diphosphate + H(+). This chain is Histidine--tRNA ligase, found in Limosilactobacillus fermentum (strain NBRC 3956 / LMG 18251) (Lactobacillus fermentum).